We begin with the raw amino-acid sequence, 502 residues long: tRNA-2-methylthio-N(6)-dimethylallyladenosine synthase (502 aa).

The region spanning 12–129 (RTYQVRTYGC…LPVLLERARH (118 aa)) is the MTTase N-terminal domain. 6 residues coordinate [4Fe-4S] cluster: Cys21, Cys58, Cys92, Cys166, Cys170, and Cys173. The region spanning 152–383 (RESTYAGWVS…ACVEEITWAE (232 aa)) is the Radical SAM core domain. One can recognise a TRAM domain in the interval 385 to 455 (RRLVGETVEV…PHHLNADGEP (71 aa)). The disordered stretch occupies residues 451 to 502 (ADGEPLAHRRTPAGDAAEAGRRPRTAGVSLGLPTVGAPPSPVPPAASSACAC).

The protein belongs to the methylthiotransferase family. MiaB subfamily. Monomer. Requires [4Fe-4S] cluster as cofactor.

It is found in the cytoplasm. The catalysed reaction is N(6)-dimethylallyladenosine(37) in tRNA + (sulfur carrier)-SH + AH2 + 2 S-adenosyl-L-methionine = 2-methylsulfanyl-N(6)-dimethylallyladenosine(37) in tRNA + (sulfur carrier)-H + 5'-deoxyadenosine + L-methionine + A + S-adenosyl-L-homocysteine + 2 H(+). Its function is as follows. Catalyzes the methylthiolation of N6-(dimethylallyl)adenosine (i(6)A), leading to the formation of 2-methylthio-N6-(dimethylallyl)adenosine (ms(2)i(6)A) at position 37 in tRNAs that read codons beginning with uridine. This is tRNA-2-methylthio-N(6)-dimethylallyladenosine synthase from Salinispora arenicola (strain CNS-205).